The chain runs to 130 residues: Putative pre-16S rRNA nuclease (130 aa).

The protein belongs to the YqgF nuclease family.

Its subcellular location is the cytoplasm. Its function is as follows. Could be a nuclease involved in processing of the 5'-end of pre-16S rRNA. This chain is Putative pre-16S rRNA nuclease, found in Buchnera aphidicola subsp. Cinara cedri (strain Cc).